The sequence spans 540 residues: Chaperonin GroEL 1 (540 aa).

Residues 29–32 (TLGP), 86–90 (DGTTT), Gly413, 477–479 (NAA), and Asp493 each bind ATP.

It belongs to the chaperonin (HSP60) family. Forms a cylinder of 14 subunits composed of two heptameric rings stacked back-to-back. Interacts with the co-chaperonin GroES.

The protein localises to the cytoplasm. It catalyses the reaction ATP + H2O + a folded polypeptide = ADP + phosphate + an unfolded polypeptide.. Its function is as follows. Together with its co-chaperonin GroES, plays an essential role in assisting protein folding. The GroEL-GroES system forms a nano-cage that allows encapsulation of the non-native substrate proteins and provides a physical environment optimized to promote and accelerate protein folding. This is Chaperonin GroEL 1 from Salinispora arenicola (strain CNS-205).